A 148-amino-acid chain; its full sequence is UPF0178 protein lpl0088 (148 aa).

This sequence belongs to the UPF0178 family.

This Legionella pneumophila (strain Lens) protein is UPF0178 protein lpl0088.